We begin with the raw amino-acid sequence, 490 residues long: Cytochrome P450 2W1 (490 aa).

Positions 1 to 22 (MALLLLLFLGLLGLWGLLCACA) are cleaved as a signal peptide. N-linked (GlcNAc...) asparagine glycosylation occurs at Asn-177. Cys-433 provides a ligand contact to heme.

The protein belongs to the cytochrome P450 family. Heme serves as cofactor. As to expression, very low levels are detected in fetal and adult tissues. Highly expressed in several tumor samples, in particular colon and adrenal tumors.

Its subcellular location is the endoplasmic reticulum lumen. It localises to the cell membrane. The protein resides in the microsome membrane. It carries out the reaction all-trans-retinoate + reduced [NADPH--hemoprotein reductase] + O2 = all-trans-4-hydroxyretinoate + oxidized [NADPH--hemoprotein reductase] + H2O + H(+). The enzyme catalyses 1-(9Z-octadecenoyl)-sn-glycero-3-phosphocholine + reduced [NADPH--hemoprotein reductase] + O2 = 1-[8-hydroxy-(9Z)-octadecenoyl]-sn-glycero-3-phosphocholine + oxidized [NADPH--hemoprotein reductase] + H2O + H(+). The catalysed reaction is 1-(9Z-octadecenoyl)-sn-glycero-3-phosphocholine + reduced [NADPH--hemoprotein reductase] + O2 = 1-[11-hydroxy-(9Z)-octadecenoyl]-sn-glycero-3-phosphocholine + oxidized [NADPH--hemoprotein reductase] + H2O + H(+). It catalyses the reaction 1-(9Z-octadecenoyl)-sn-glycero-3-phosphocholine + reduced [NADPH--hemoprotein reductase] + O2 = 1-[(9S,10R)-epoxy-octadecanoyl]-sn-glycero-3-phosphocholine + oxidized [NADPH--hemoprotein reductase] + H2O + H(+). It carries out the reaction 1-(9Z-octadecenoyl)-sn-glycero-3-phosphocholine + reduced [NADPH--hemoprotein reductase] + O2 = 1-[(9R,10S)-epoxy-octadecanoyl]-sn-glycero-3-phosphocholine + oxidized [NADPH--hemoprotein reductase] + H2O + H(+). Its function is as follows. A cytochrome P450 monooxygenase that may play a role in retinoid and phospholipid metabolism. Catalyzes the hydroxylation of saturated carbon hydrogen bonds. Hydroxylates all trans-retinoic acid (atRA) to 4-hydroxyretinoate and may regulate atRA clearance. Other retinoids such as all-trans retinol and all-trans retinal are potential endogenous substrates. Catalyzes both epoxidation of double bonds and hydroxylation of carbon hydrogen bonds of the fatty acyl chain of 1-acylphospholipids/2-lysophospholipids. Can metabolize various lysophospholipids classes including lysophosphatidylcholines (LPCs), lysophosphatidylinositols (LPIs), lysophosphatidylserines (LPSs), lysophosphatidylglycerols (LPGs), lysophosphatidylethanolamines (LPEs) and lysophosphatidic acids (LPAs). Has low or no activity toward 2-acylphospholipids/1-lysophospholipids, diacylphospholipids and free fatty acids. May play a role in tumorigenesis by activating procarcinogens such as aflatoxin B1, polycyclic aromatic hydrocarbon dihydrodiols and aromatic amines. Mechanistically, uses molecular oxygen inserting one oxygen atom into a substrate, and reducing the second into a water molecule, with two electrons provided by NADPH via cytochrome P450 reductase (CPR; NADPH-ferrihemoprotein reductase). In Homo sapiens (Human), this protein is Cytochrome P450 2W1.